We begin with the raw amino-acid sequence, 352 residues long: Very-long-chain 3-oxoacyl-CoA reductase (352 aa).

The helical transmembrane segment at 20 to 40 (TLWFIFIFGLLKLVPFALRFL) threads the bilayer. The NADP(+) site is built by Val-66, Asp-120, Asn-147, Tyr-228, Lys-232, Val-261, and Ser-263. The active-site Proton donor is Tyr-228. Lys-232 functions as the Lowers pKa of active site Tyr in the catalytic mechanism.

It belongs to the short-chain dehydrogenases/reductases (SDR) family.

Its subcellular location is the endoplasmic reticulum membrane. The catalysed reaction is a very-long-chain (3R)-3-hydroxyacyl-CoA + NADP(+) = a very-long-chain 3-oxoacyl-CoA + NADPH + H(+). Its pathway is lipid metabolism; fatty acid biosynthesis. Functionally, component of the microsomal membrane bound fatty acid elongation system, which produces the 26-carbon very long-chain fatty acids (VLCFA) from palmitate. Catalyzes the reduction of the 3-ketoacyl-CoA intermediate that is formed in each cycle of fatty acid elongation. VLCFAs serve as precursors for ceramide and sphingolipids. The polypeptide is Very-long-chain 3-oxoacyl-CoA reductase (Candida glabrata (strain ATCC 2001 / BCRC 20586 / JCM 3761 / NBRC 0622 / NRRL Y-65 / CBS 138) (Yeast)).